Here is a 288-residue protein sequence, read N- to C-terminus: Inositol monophosphatase 2 (288 aa).

Mg(2+) contacts are provided by Glu-81, Asp-101, Ile-103, and Asp-104. Glu-81 contributes to the substrate binding site. Substrate-binding positions include 103 to 106 (IDGT), 205 to 207 (GSS), Gln-224, and Asp-231. Asp-231 contacts Mg(2+).

It belongs to the inositol monophosphatase superfamily. In terms of assembly, homodimer. It depends on Mg(2+) as a cofactor.

The protein localises to the cytoplasm. The enzyme catalyses a myo-inositol phosphate + H2O = myo-inositol + phosphate. The catalysed reaction is 1D-myo-inositol 1-phosphate + H2O = myo-inositol + phosphate. It carries out the reaction 1D-myo-inositol 2-phosphate + H2O = myo-inositol + phosphate. It catalyses the reaction 1D-myo-inositol 3-phosphate + H2O = myo-inositol + phosphate. The enzyme catalyses 1D-myo-inositol 4-phosphate + H2O = myo-inositol + phosphate. The catalysed reaction is 1D-myo-inositol 5-phosphate + H2O = myo-inositol + phosphate. It carries out the reaction 1D-myo-inositol 6-phosphate + H2O = myo-inositol + phosphate. It catalyses the reaction alpha-D-glucose 1-phosphate + H2O = D-glucose + phosphate. The enzyme catalyses glycerol 2-phosphate + H2O = glycerol + phosphate. The catalysed reaction is adenosine 2'-phosphate + H2O = adenosine + phosphate. The protein operates within polyol metabolism; myo-inositol biosynthesis; myo-inositol from D-glucose 6-phosphate: step 2/2. Inhibited by high Li(+) and restricted Mg(2+) concentrations. In terms of biological role, phosphatase that can use myo-inositol monophosphates, myo-inositol 1,4-diphosphate, scyllo-inositol-1,4-diphosphate, glucose-1-phosphate, beta-glycerophosphate and 2'-AMP as substrates in vitro. It is likely that IMPA2 has an as yet unidentified in vivo substrate(s). Has been implicated as the pharmacological target for lithium (Li(+)) action in brain. This is Inositol monophosphatase 2 from Homo sapiens (Human).